Consider the following 328-residue polypeptide: Nickel import system permease protein NikB (328 aa).

Transmembrane regions (helical) follow at residues 11–31, 104–124, 139–159, 170–190, 229–249, and 279–299; these read LMQM…LMKL, LLIS…LGII, VIST…LLFI, ILSQ…AYII, ILPI…GTVV, and VLFI…LTLL. The ABC transmembrane type-1 domain occupies 100 to 297; that stretch reads APITLLISFS…IINTIADLLT (198 aa).

The protein belongs to the binding-protein-dependent transport system permease family. OppBC subfamily. As to quaternary structure, the complex is composed of two ATP-binding proteins (NikD and NikE), two transmembrane proteins (NikB and NikC) and a solute-binding protein (NikA).

It is found in the cell membrane. In terms of biological role, part of the ABC transporter complex NikABCDE (Opp2) involved in nickel import. Probably responsible for the translocation of the substrate across the membrane. The polypeptide is Nickel import system permease protein NikB (Staphylococcus aureus (strain MSSA476)).